The following is a 529-amino-acid chain: Peptide chain release factor 3 (529 aa).

The region spanning Glu-7 to Arg-275 is the tr-type G domain. GTP is bound by residues Ser-16 to Thr-23, Asp-84 to His-88, and Asn-138 to Asp-141.

Belongs to the TRAFAC class translation factor GTPase superfamily. Classic translation factor GTPase family. PrfC subfamily.

The protein resides in the cytoplasm. In terms of biological role, increases the formation of ribosomal termination complexes and stimulates activities of RF-1 and RF-2. It binds guanine nucleotides and has strong preference for UGA stop codons. It may interact directly with the ribosome. The stimulation of RF-1 and RF-2 is significantly reduced by GTP and GDP, but not by GMP. This chain is Peptide chain release factor 3, found in Syntrophus aciditrophicus (strain SB).